The chain runs to 170 residues: Protein ripply3 (170 aa).

The WRPW motif signature appears at Trp40 to Trp43. The span at Glu51–Glu61 shows a compositional bias: basic and acidic residues. Positions Glu51–Gln78 are disordered. The tract at residues His79–Tyr114 is ripply homology domain. The span at Gly142–Val155 shows a compositional bias: polar residues. The segment at Gly142–Ala170 is disordered.

It belongs to the ripply family. In terms of assembly, interacts with tbx1 and tle4/grg4. As to expression, at neurula stage, expressed in the region close to the heart mesoderm. At the tailbud stage, expressed in the pharyngeal region.

Its subcellular location is the nucleus. Acts as a transcriptional corepressor. Negative regulator of the transcriptional activity of tbx1 that plays a key role in pharyngeal development. Plays a role in the formation of the anteroposterior (AP) axis during embryonic development; required to establish the posterolateral border of the pre-placodal ectoderm (PPE) acting downstream of the retinoic acid receptor (RAR) signaling. The sequence is that of Protein ripply3 (ripply3) from Xenopus laevis (African clawed frog).